The chain runs to 238 residues: Aspartate/glutamate leucyltransferase (238 aa).

The protein belongs to the R-transferase family. Bpt subfamily.

It localises to the cytoplasm. It carries out the reaction N-terminal L-glutamyl-[protein] + L-leucyl-tRNA(Leu) = N-terminal L-leucyl-L-glutamyl-[protein] + tRNA(Leu) + H(+). The catalysed reaction is N-terminal L-aspartyl-[protein] + L-leucyl-tRNA(Leu) = N-terminal L-leucyl-L-aspartyl-[protein] + tRNA(Leu) + H(+). Its function is as follows. Functions in the N-end rule pathway of protein degradation where it conjugates Leu from its aminoacyl-tRNA to the N-termini of proteins containing an N-terminal aspartate or glutamate. The chain is Aspartate/glutamate leucyltransferase from Aeromonas salmonicida (strain A449).